The following is a 267-amino-acid chain: tRNA-cytidine(32) 2-sulfurtransferase 2 (267 aa).

Residues 42–47 carry the PP-loop motif motif; sequence SGGKDS. [4Fe-4S] cluster is bound by residues cysteine 117, cysteine 120, and cysteine 208.

It belongs to the TtcA family. In terms of assembly, homodimer. Mg(2+) serves as cofactor. The cofactor is [4Fe-4S] cluster.

It is found in the cytoplasm. It carries out the reaction cytidine(32) in tRNA + S-sulfanyl-L-cysteinyl-[cysteine desulfurase] + AH2 + ATP = 2-thiocytidine(32) in tRNA + L-cysteinyl-[cysteine desulfurase] + A + AMP + diphosphate + H(+). It participates in tRNA modification. Catalyzes the ATP-dependent 2-thiolation of cytidine in position 32 of tRNA, to form 2-thiocytidine (s(2)C32). The sulfur atoms are provided by the cysteine/cysteine desulfurase (IscS) system. The sequence is that of tRNA-cytidine(32) 2-sulfurtransferase 2 from Francisella tularensis subsp. holarctica (strain FTNF002-00 / FTA).